The primary structure comprises 625 residues: Chaperone protein HtpG (625 aa).

The tract at residues 1–339 (MNKQTLSFQA…SSDLPLNVSR (339 aa)) is a; substrate-binding. The b stretch occupies residues 340–557 (ELLQESRDVK…DGDISGHLAR (218 aa)). The tract at residues 558-625 (LLKQAGQSAP…YVQRVNRLLV (68 aa)) is c.

Belongs to the heat shock protein 90 family. As to quaternary structure, homodimer.

It is found in the cytoplasm. Molecular chaperone. Has ATPase activity. The chain is Chaperone protein HtpG from Methylibium petroleiphilum (strain ATCC BAA-1232 / LMG 22953 / PM1).